Here is an 814-residue protein sequence, read N- to C-terminus: Oxysterol-binding protein-related protein 1C (814 aa).

The 133-residue stretch at Gly-103–Asp-235 folds into the PH domain. Residues Leu-300–Asn-367 adopt a coiled-coil conformation. 2 disordered regions span residues Val-319 to Glu-366 and Ser-379 to Lys-411. Residues Glu-347 to Glu-366 are compositionally biased toward acidic residues. Residues Ser-379 to Ser-394 show a composition bias toward low complexity. Residues Ser-395–Asp-407 show a composition bias toward acidic residues.

Belongs to the OSBP family. Expressed in roots, leaves, stems, flowers and pollen.

Its function is as follows. May be involved in the transport of sterols. This chain is Oxysterol-binding protein-related protein 1C (ORP1C), found in Arabidopsis thaliana (Mouse-ear cress).